We begin with the raw amino-acid sequence, 288 residues long: UTP--glucose-1-phosphate uridylyltransferase (288 aa).

Belongs to the UDPGP type 2 family.

The catalysed reaction is alpha-D-glucose 1-phosphate + UTP + H(+) = UDP-alpha-D-glucose + diphosphate. It functions in the pathway glycolipid metabolism; diglucosyl-diacylglycerol biosynthesis. Catalyzes the formation of UDP-glucose from glucose-1-phosphate and UTP. This is an intermediate step in the biosynthesis of diglucosyl-diacylglycerol (Glc2-DAG), i.e. the predominant glycolipid found in the S.aureus membrane, which is also used as a membrane anchor for lipoteichoic acid (LTA). This chain is UTP--glucose-1-phosphate uridylyltransferase (gtaB), found in Staphylococcus aureus (strain USA300).